Here is an 825-residue protein sequence, read N- to C-terminus: Arabinolytic transcriptional activator araR (825 aa).

The segment covering 1–17 has biased composition (polar residues); it reads MASSHQGNGTVPNSQTD. Residues 1–28 form a disordered region; the sequence is MASSHQGNGTVPNSQTDAPPDSSTKRRW. The zn(2)-C6 fungal-type DNA-binding region spans 35–61; sequence CDSCHARRVRCDRQFPCSRCLRSEITC. The segment at 117–152 is disordered; it reads STFHHRSPPANAPTVSAPSVDGRRSQTDPQLPVRRP.

The protein belongs to the xlnR/xlr1 family. araR subfamily.

Its subcellular location is the nucleus. Its function is as follows. Transcriptional activator of the arabinanolytic system. Involved in the regulation of extracellular arabinanolytic genes and in the regulation of the intracellular activities of L-arabinose catabolic genes in the pentose catabolic pathway (PCP) in response to the presence of L-arabinose. The polypeptide is Arabinolytic transcriptional activator araR (Emericella nidulans (strain FGSC A4 / ATCC 38163 / CBS 112.46 / NRRL 194 / M139) (Aspergillus nidulans)).